A 151-amino-acid chain; its full sequence is Lipoprotein signal peptidase (151 aa).

Transmembrane regions (helical) follow at residues 61 to 81 and 88 to 107; these read GSQW…IWIG and SRWQ…GNGI. Catalysis depends on residues aspartate 117 and aspartate 133. Residues 128–148 form a helical membrane-spanning segment; sequence VFNLADVAINLAVLCLLIEAI.

This sequence belongs to the peptidase A8 family.

Its subcellular location is the cell inner membrane. The catalysed reaction is Release of signal peptides from bacterial membrane prolipoproteins. Hydrolyzes -Xaa-Yaa-Zaa-|-(S,diacylglyceryl)Cys-, in which Xaa is hydrophobic (preferably Leu), and Yaa (Ala or Ser) and Zaa (Gly or Ala) have small, neutral side chains.. It participates in protein modification; lipoprotein biosynthesis (signal peptide cleavage). In terms of biological role, this protein specifically catalyzes the removal of signal peptides from prolipoproteins. The polypeptide is Lipoprotein signal peptidase (Synechococcus sp. (strain RCC307)).